Reading from the N-terminus, the 391-residue chain is Chorismate synthase (391 aa).

An NADP(+)-binding site is contributed by arginine 48. Residues 126-128 (RAS), glycine 286, 301-305 (KPTSS), and arginine 328 each bind FMN.

The protein belongs to the chorismate synthase family. Requires FMNH2 as cofactor.

It carries out the reaction 5-O-(1-carboxyvinyl)-3-phosphoshikimate = chorismate + phosphate. The protein operates within metabolic intermediate biosynthesis; chorismate biosynthesis; chorismate from D-erythrose 4-phosphate and phosphoenolpyruvate: step 7/7. Functionally, catalyzes the anti-1,4-elimination of the C-3 phosphate and the C-6 proR hydrogen from 5-enolpyruvylshikimate-3-phosphate (EPSP) to yield chorismate, which is the branch point compound that serves as the starting substrate for the three terminal pathways of aromatic amino acid biosynthesis. This reaction introduces a second double bond into the aromatic ring system. The polypeptide is Chorismate synthase (Saccharolobus islandicus (strain L.S.2.15 / Lassen #1) (Sulfolobus islandicus)).